Reading from the N-terminus, the 538-residue chain is MAKQIEFNDAARKSLEAGVDRLANAVKVTLGPRGRNVVLDKKWGAPTITNDGVTIAREIELDDPYENLGAQLAKEVATKTNDVAGDGTTTATVLAQALVKEGLRNVAAGAAPSALKHGIEVSVEAIAGRLLENTREVAGGQVASVAAISAQSPEIGELLAEAFDKVGKDGVITIEESSSMVTELVLTEGMQFDKGYLSPHFVTDHERQEAVLEDALILINQGKISSIQEFLPLLEKTLKASKPLFIIAEDVDGEALSTLIVNRLRGNLNVVAVKAPGFGDRRKAMLQDIAILTGAQVVSPEIGLSLDQVGLEVLGTARRITVTKDNTTIVDGAGTDADVADRVSQLRAELERTDSDWDKEKLQERLAKLAGGIGVIKVGAATEVELKEKKHRIEDAVSSTRAALEEGIVAGGGSALVQAAKALDENAEVKALEGDAVTAVNLVRRAVAQPLRWIAENAGHDGYLVISKVAELPDGHGFNAATGEYGDLIAQGVIDPVKVTRSALRNAASIAALVLTTEALVVEKPEEDESDSHAGHQH.

Residues 29-32 (TLGP), 86-90 (DGTTT), glycine 412, 479-481 (NAA), and aspartate 495 contribute to the ATP site.

Belongs to the chaperonin (HSP60) family. Forms a cylinder of 14 subunits composed of two heptameric rings stacked back-to-back. Interacts with the co-chaperonin GroES.

The protein resides in the cytoplasm. It carries out the reaction ATP + H2O + a folded polypeptide = ADP + phosphate + an unfolded polypeptide.. Functionally, together with its co-chaperonin GroES, plays an essential role in assisting protein folding. The GroEL-GroES system forms a nano-cage that allows encapsulation of the non-native substrate proteins and provides a physical environment optimized to promote and accelerate protein folding. The sequence is that of Chaperonin GroEL 2 from Renibacterium salmoninarum (strain ATCC 33209 / DSM 20767 / JCM 11484 / NBRC 15589 / NCIMB 2235).